The primary structure comprises 342 residues: Nicotinate-nucleotide--dimethylbenzimidazole phosphoribosyltransferase (342 aa).

The active-site Proton acceptor is Glu-311.

Belongs to the CobT family.

The enzyme catalyses 5,6-dimethylbenzimidazole + nicotinate beta-D-ribonucleotide = alpha-ribazole 5'-phosphate + nicotinate + H(+). The protein operates within nucleoside biosynthesis; alpha-ribazole biosynthesis; alpha-ribazole from 5,6-dimethylbenzimidazole: step 1/2. Its function is as follows. Catalyzes the synthesis of alpha-ribazole-5'-phosphate from nicotinate mononucleotide (NAMN) and 5,6-dimethylbenzimidazole (DMB). This Shewanella piezotolerans (strain WP3 / JCM 13877) protein is Nicotinate-nucleotide--dimethylbenzimidazole phosphoribosyltransferase.